The sequence spans 182 residues: ATP-dependent protease subunit HslV (182 aa).

Thr-10 is an active-site residue. Residues Ala-166, Cys-169, and Ser-172 each coordinate Na(+).

It belongs to the peptidase T1B family. HslV subfamily. A double ring-shaped homohexamer of HslV is capped on each side by a ring-shaped HslU homohexamer. The assembly of the HslU/HslV complex is dependent on binding of ATP.

Its subcellular location is the cytoplasm. It carries out the reaction ATP-dependent cleavage of peptide bonds with broad specificity.. With respect to regulation, allosterically activated by HslU binding. Functionally, protease subunit of a proteasome-like degradation complex believed to be a general protein degrading machinery. This chain is ATP-dependent protease subunit HslV, found in Rickettsia typhi (strain ATCC VR-144 / Wilmington).